The following is a 415-amino-acid chain: Glucose-1-phosphate adenylyltransferase (415 aa).

Residues Tyr-100, Gly-165, 182–183, and Ser-200 each bind alpha-D-glucose 1-phosphate; that span reads EK.

It belongs to the bacterial/plant glucose-1-phosphate adenylyltransferase family. Homotetramer.

It catalyses the reaction alpha-D-glucose 1-phosphate + ATP + H(+) = ADP-alpha-D-glucose + diphosphate. It participates in glycan biosynthesis; glycogen biosynthesis. Involved in the biosynthesis of ADP-glucose, a building block required for the elongation reactions to produce glycogen. Catalyzes the reaction between ATP and alpha-D-glucose 1-phosphate (G1P) to produce pyrophosphate and ADP-Glc. The sequence is that of Glucose-1-phosphate adenylyltransferase from Bifidobacterium animalis subsp. lactis (strain AD011).